The following is a 361-amino-acid chain: Beta-hexosaminidase (361 aa).

Substrate-binding positions include Asp69, Arg77, Arg144, and 174 to 175; that span reads KH. Catalysis depends on His187, which acts as the Proton donor/acceptor. Asp258 acts as the Nucleophile in catalysis.

The protein belongs to the glycosyl hydrolase 3 family. NagZ subfamily.

It localises to the cytoplasm. It carries out the reaction Hydrolysis of terminal non-reducing N-acetyl-D-hexosamine residues in N-acetyl-beta-D-hexosaminides.. Its pathway is cell wall biogenesis; peptidoglycan recycling. Plays a role in peptidoglycan recycling by cleaving the terminal beta-1,4-linked N-acetylglucosamine (GlcNAc) from peptide-linked peptidoglycan fragments, giving rise to free GlcNAc, anhydro-N-acetylmuramic acid and anhydro-N-acetylmuramic acid-linked peptides. The sequence is that of Beta-hexosaminidase from Neisseria meningitidis serogroup A / serotype 4A (strain DSM 15465 / Z2491).